A 303-amino-acid polypeptide reads, in one-letter code: NAD kinase (303 aa).

Residue Asp-71 is the Proton acceptor of the active site. Residues Asp-71–Gly-72, Asn-145–Asp-146, Arg-156, Arg-173, Asp-175, Thr-186–Ser-191, and Gln-245 contribute to the NAD(+) site.

This sequence belongs to the NAD kinase family. A divalent metal cation is required as a cofactor.

It is found in the cytoplasm. It carries out the reaction NAD(+) + ATP = ADP + NADP(+) + H(+). Involved in the regulation of the intracellular balance of NAD and NADP, and is a key enzyme in the biosynthesis of NADP. Catalyzes specifically the phosphorylation on 2'-hydroxyl of the adenosine moiety of NAD to yield NADP. The protein is NAD kinase of Magnetococcus marinus (strain ATCC BAA-1437 / JCM 17883 / MC-1).